The sequence spans 607 residues: Glucose-6-phosphate isomerase, glycosomal (607 aa).

Glu411 functions as the Proton donor in the catalytic mechanism. Residues His442 and Lys571 contribute to the active site. Positions 605 to 607 (SHL) match the Microbody targeting signal motif.

This sequence belongs to the GPI family. As to quaternary structure, homodimer.

Its subcellular location is the glycosome. The enzyme catalyses alpha-D-glucose 6-phosphate = beta-D-fructose 6-phosphate. Its pathway is carbohydrate degradation; glycolysis; D-glyceraldehyde 3-phosphate and glycerone phosphate from D-glucose: step 2/4. This is Glucose-6-phosphate isomerase, glycosomal (PGI) from Trypanosoma brucei brucei.